Consider the following 891-residue polypeptide: Protein translocase subunit SecA 1 (891 aa).

ATP contacts are provided by residues Q85, 103-107 (GEGKT), and D491. Residues C877, C879, C888, and C889 each contribute to the Zn(2+) site.

It belongs to the SecA family. As to quaternary structure, monomer and homodimer. Part of the essential Sec protein translocation apparatus which comprises SecA, SecYEG and auxiliary proteins SecDF. Other proteins may also be involved. Zn(2+) serves as cofactor.

It is found in the cell membrane. The protein localises to the cytoplasm. The enzyme catalyses ATP + H2O + cellular proteinSide 1 = ADP + phosphate + cellular proteinSide 2.. In terms of biological role, part of the Sec protein translocase complex. Interacts with the SecYEG preprotein conducting channel. Has a central role in coupling the hydrolysis of ATP to the transfer of proteins into and across the cell membrane, serving as an ATP-driven molecular motor driving the stepwise translocation of polypeptide chains across the membrane. The polypeptide is Protein translocase subunit SecA 1 (Clostridioides difficile (strain 630) (Peptoclostridium difficile)).